We begin with the raw amino-acid sequence, 334 residues long: Protein POLAR-like 1 (334 aa).

Residues 53–63 (IRTSSEDDHHR) are compositionally biased toward basic and acidic residues. The interval 53–74 (IRTSSEDDHHRVGQFSDSPPPT) is disordered. Positions 273–300 (ETRQQEEIKELEIALDDAKQRLHLKETE) form a coiled coil.

It is found in the cytoplasm. It localises to the cell cortex. Acts as a stomatal lineage scaffold which regulates subcellular localization and transient polarization of kinases (e.g. ASK7/BIN2 and ASK3/SK12) involved in asymmetric cell division (ACD) in a BASL-dependent manner. This chain is Protein POLAR-like 1, found in Arabidopsis thaliana (Mouse-ear cress).